Here is a 607-residue protein sequence, read N- to C-terminus: Dihydroxy-acid dehydratase (607 aa).

Asp-81 contributes to the Mg(2+) binding site. [2Fe-2S] cluster is bound at residue Cys-122. Asp-123 and Lys-124 together coordinate Mg(2+). Lys-124 carries the N6-carboxylysine modification. Cys-195 contributes to the [2Fe-2S] cluster binding site. Glu-489 lines the Mg(2+) pocket. Ser-515 (proton acceptor) is an active-site residue.

This sequence belongs to the IlvD/Edd family. As to quaternary structure, homodimer. The cofactor is [2Fe-2S] cluster. Mg(2+) is required as a cofactor.

It carries out the reaction (2R)-2,3-dihydroxy-3-methylbutanoate = 3-methyl-2-oxobutanoate + H2O. It catalyses the reaction (2R,3R)-2,3-dihydroxy-3-methylpentanoate = (S)-3-methyl-2-oxopentanoate + H2O. It participates in amino-acid biosynthesis; L-isoleucine biosynthesis; L-isoleucine from 2-oxobutanoate: step 3/4. The protein operates within amino-acid biosynthesis; L-valine biosynthesis; L-valine from pyruvate: step 3/4. Functionally, functions in the biosynthesis of branched-chain amino acids. Catalyzes the dehydration of (2R,3R)-2,3-dihydroxy-3-methylpentanoate (2,3-dihydroxy-3-methylvalerate) into 2-oxo-3-methylpentanoate (2-oxo-3-methylvalerate) and of (2R)-2,3-dihydroxy-3-methylbutanoate (2,3-dihydroxyisovalerate) into 2-oxo-3-methylbutanoate (2-oxoisovalerate), the penultimate precursor to L-isoleucine and L-valine, respectively. This is Dihydroxy-acid dehydratase from Deinococcus radiodurans (strain ATCC 13939 / DSM 20539 / JCM 16871 / CCUG 27074 / LMG 4051 / NBRC 15346 / NCIMB 9279 / VKM B-1422 / R1).